Here is a 457-residue protein sequence, read N- to C-terminus: Multidrug resistance protein MdtK (457 aa).

The next 12 membrane-spanning stretches (helical) occupy residues Leu-11–Val-31, Ile-53–Ala-73, Trp-93–Ile-113, Ala-127–Ala-147, Gly-160–Tyr-180, Leu-188–Met-208, Leu-243–Val-263, Ile-276–Thr-296, Ala-314–Val-334, Val-350–Ile-370, Ile-387–Ala-407, and Pro-418–Leu-438.

This sequence belongs to the multi antimicrobial extrusion (MATE) (TC 2.A.66.1) family. MdtK subfamily.

The protein localises to the cell inner membrane. In terms of biological role, multidrug efflux pump that functions probably as a Na(+)/drug antiporter. The chain is Multidrug resistance protein MdtK from Salmonella enteritidis PT4 (strain P125109).